Here is a 1295-residue protein sequence, read N- to C-terminus: Phosphoribosylformylglycinamidine synthase (1295 aa).

The segment at 304–326 (WPGAATGSGGEIRDEGATGRGAK) is disordered. ATP contacts are provided by residues 306-317 (GAATGSGGEIRD), 385-387 (TGY), and A677. 4 residues coordinate Mg(2+): D678, E717, N721, and D884. Over residues 995–1012 (LRDNPESADQEHASRQDD) the composition is skewed to basic and acidic residues. Positions 995 to 1017 (LRDNPESADQEHASRQDDNDPGL) are disordered. The region spanning 1042–1295 (VAVLREQGVN…LFRNARKQLG (254 aa)) is the Glutamine amidotransferase type-1 domain. The active-site Nucleophile is the C1135. Catalysis depends on residues H1260 and E1262.

The protein in the N-terminal section; belongs to the FGAMS family. As to quaternary structure, monomer.

The protein localises to the cytoplasm. The catalysed reaction is N(2)-formyl-N(1)-(5-phospho-beta-D-ribosyl)glycinamide + L-glutamine + ATP + H2O = 2-formamido-N(1)-(5-O-phospho-beta-D-ribosyl)acetamidine + L-glutamate + ADP + phosphate + H(+). It functions in the pathway purine metabolism; IMP biosynthesis via de novo pathway; 5-amino-1-(5-phospho-D-ribosyl)imidazole from N(2)-formyl-N(1)-(5-phospho-D-ribosyl)glycinamide: step 1/2. Functionally, phosphoribosylformylglycinamidine synthase involved in the purines biosynthetic pathway. Catalyzes the ATP-dependent conversion of formylglycinamide ribonucleotide (FGAR) and glutamine to yield formylglycinamidine ribonucleotide (FGAM) and glutamate. In Sodalis glossinidius (strain morsitans), this protein is Phosphoribosylformylglycinamidine synthase.